The following is a 405-amino-acid chain: uncharacterized protein (405 aa).

Residues 1–20 (MKAKLALSIIGLVLASLVAG) form the signal peptide. The residue at position 21 (cysteine 21) is an N-acetylcysteine. Cysteine 21 carries S-archaeol cysteine lipidation.

This sequence belongs to the BMP lipoprotein family.

Its subcellular location is the cell membrane. This is an uncharacterized protein from Pyrococcus horikoshii (strain ATCC 700860 / DSM 12428 / JCM 9974 / NBRC 100139 / OT-3).